A 519-amino-acid polypeptide reads, in one-letter code: Protein M35 (519 aa).

The tract at residues 485 to 519 (PVRPIRGGGQRMANMRGARPYSTVQRGRRRHESEV) is disordered. Positions 510–519 (RGRRRHESEV) are enriched in basic residues.

It is found in the host nucleus. Its function is as follows. Plays a role in the inhibition of host type I interferon production within the host nucleus. Targets specifically the NF-kappa-B-mediated interferon-beta transcription. This is Protein M35 (M35) from Mus musculus (Mouse).